Consider the following 377-residue polypeptide: tRNA/tmRNA (uracil-C(5))-methyltransferase (377 aa).

The S-adenosyl-L-methionine site is built by Gln-199, Tyr-227, Asn-232, Glu-248, and Asp-308. Cys-333 acts as the Nucleophile in catalysis. The active-site Proton acceptor is Glu-367.

The protein belongs to the class I-like SAM-binding methyltransferase superfamily. RNA M5U methyltransferase family. TrmA subfamily.

The catalysed reaction is uridine(54) in tRNA + S-adenosyl-L-methionine = 5-methyluridine(54) in tRNA + S-adenosyl-L-homocysteine + H(+). The enzyme catalyses uridine(341) in tmRNA + S-adenosyl-L-methionine = 5-methyluridine(341) in tmRNA + S-adenosyl-L-homocysteine + H(+). Its function is as follows. Dual-specificity methyltransferase that catalyzes the formation of 5-methyluridine at position 54 (m5U54) in all tRNAs, and that of position 341 (m5U341) in tmRNA (transfer-mRNA). The sequence is that of tRNA/tmRNA (uracil-C(5))-methyltransferase from Aeromonas salmonicida (strain A449).